A 334-amino-acid chain; its full sequence is Mediator of RNA polymerase II transcription subunit 4 (334 aa).

The stretch at 71–100 (QEREQLIRTLEAHVEKRDEVIQQLETNLKS) forms a coiled coil. A disordered region spans residues 193–334 (PLITSPSASS…ASKKTGSSNK (142 aa)). 2 stretches are compositionally biased toward polar residues: residues 194–206 (LITS…SNGG) and 251–282 (NEKQ…SSPN).

This sequence belongs to the Mediator complex subunit 4 family. In terms of assembly, component of the Mediator complex.

The protein resides in the nucleus. Component of the Mediator complex, a coactivator involved in the regulated transcription of nearly all RNA polymerase II-dependent genes. Mediator functions as a bridge to convey information from gene-specific regulatory proteins to the basal RNA polymerase II transcription machinery. Mediator is recruited to promoters by direct interactions with regulatory proteins and serves as a scaffold for the assembly of a functional preinitiation complex with RNA polymerase II and the general transcription factors. In Caenorhabditis elegans, this protein is Mediator of RNA polymerase II transcription subunit 4 (mdt-4).